Consider the following 674-residue polypeptide: Acetyl-coenzyme A synthetase (674 aa).

CoA is bound by residues 201-204 and Thr320; that span reads RGGR. Residues 396–398, 420–425, Asp518, and Arg533 each bind ATP; these read GEP and DTYWQT. Ser541 contributes to the CoA binding site. Arg544 lines the ATP pocket. Arg603 contributes to the CoA binding site.

It belongs to the ATP-dependent AMP-binding enzyme family.

It carries out the reaction acetate + ATP + CoA = acetyl-CoA + AMP + diphosphate. The polypeptide is Acetyl-coenzyme A synthetase (acsA) (Dictyostelium discoideum (Social amoeba)).